We begin with the raw amino-acid sequence, 1551 residues long: Dual oxidase 1 (1551 aa).

Residues 1-21 (MAVYSAVAWILLFGVLASLGA) form the signal peptide. At 22-596 (QNPVSWEVQR…YFKGSGFGFG (575 aa)) the chain is on the extracellular side. The tract at residues 26–593 (SWEVQRFDGW…VRDYFKGSGF (568 aa)) is peroxidase-like; mediates peroxidase activity. N-linked (GlcNAc...) asparagine glycosylation is found at N94, N342, N354, N461, and N534. A helical membrane pass occupies residues 597–617 (LTIGTLCCFPLVSLLSAWIVA). The Cytoplasmic segment spans residues 618-1044 (RLRMRNFKRL…KRFIENYRRH (427 aa)). EF-hand domains are found at residues 815-850 (PQDM…FMKG), 851-886 (SPEE…FIEI), and 895-930 (QLAE…HDSD). D828, D830, N832, Y834, E839, D864, D866, N868, and E875 together coordinate Ca(2+). The interaction with TXNDC11 stretch occupies residues 956-1248 (YISQEKICPS…GSFALIQMPR (293 aa)). Residues 1045–1065 (IGCVAVFYTITGALFLERAYY) form a helical membrane-spanning segment. Residues 1066–1080 (YAFAAHHSGITDTTR) are Extracellular-facing. A helical transmembrane segment spans residues 1081–1101 (VGIILSRGTAASISFMFSYIL). The Ferric oxidoreductase domain occupies 1087–1269 (RGTAASISFM…YVGDKLVSLS (183 aa)). Topologically, residues 1102 to 1136 (LTMCRNLITFLRETFLNRYIPFDAAVDFHRFIAST) are cytoplasmic. Residues 1137–1157 (AIILTVLHSAGHVVNVYLFSI) form a helical membrane-spanning segment. Residues 1158–1188 (SPLSVLSCLFPDLFHDDGSEFPQKYYWWFFQ) are Extracellular-facing. The helical transmembrane segment at 1189–1209 (TVPGLTGVLLLLALAIMYVFA) threads the bilayer. Topologically, residues 1210 to 1226 (SHHFRRRSFRGFWLTHH) are cytoplasmic. A helical membrane pass occupies residues 1227 to 1247 (LYIFLYILLIIHGSFALIQMP). Residue R1248 is a topological domain, extracellular. The helical transmembrane segment at 1249 to 1269 (FHIFFLVPAIIYVGDKLVSLS) threads the bilayer. The FAD-binding FR-type domain occupies 1270 to 1376 (RKKVEISVVK…DGPFGEGHQE (107 aa)). The Cytoplasmic portion of the chain corresponds to 1270 to 1551 (RKKVEISVVK…THFSHHYENF (282 aa)).

This sequence in the N-terminal section; belongs to the peroxidase family. As to quaternary structure, interacts with TXNDC11, TPO and CYBA. In terms of processing, N-glycosylated. Expressed in thyrocytes (at protein level).

The protein resides in the apical cell membrane. The enzyme catalyses NADH + O2 + H(+) = H2O2 + NAD(+). It catalyses the reaction NADPH + O2 + H(+) = H2O2 + NADP(+). The protein operates within hormone biosynthesis; thyroid hormone biosynthesis. With respect to regulation, the NADPH oxidase activity is calcium-dependent. Peroxidase activity is inhibited by aminobenzohydrazide. Its function is as follows. Generates hydrogen peroxide which is required for the activity of thyroid peroxidase/TPO and lactoperoxidase/LPO. Plays a role in thyroid hormones synthesis and lactoperoxidase-mediated antimicrobial defense at the surface of mucosa. May have its own peroxidase activity through its N-terminal peroxidase-like domain. In Rattus norvegicus (Rat), this protein is Dual oxidase 1 (Duox1).